We begin with the raw amino-acid sequence, 536 residues long: Phosphoenolpyruvate carboxykinase (ATP) (536 aa).

Substrate is bound by residues arginine 61, tyrosine 195, and lysine 201. ATP is bound by residues lysine 201, histidine 220, and 236–244 (GLSGTGKTT). Residues lysine 201 and histidine 220 each contribute to the Mn(2+) site. Aspartate 257 contacts Mn(2+). ATP contacts are provided by glutamate 285, arginine 323, and threonine 448. Arginine 323 is a binding site for substrate.

This sequence belongs to the phosphoenolpyruvate carboxykinase (ATP) family. Requires Mn(2+) as cofactor.

Its subcellular location is the cytoplasm. The catalysed reaction is oxaloacetate + ATP = phosphoenolpyruvate + ADP + CO2. The protein operates within carbohydrate biosynthesis; gluconeogenesis. Its function is as follows. Involved in the gluconeogenesis. Catalyzes the conversion of oxaloacetate (OAA) to phosphoenolpyruvate (PEP) through direct phosphoryl transfer between the nucleoside triphosphate and OAA. In Methylobacterium nodulans (strain LMG 21967 / CNCM I-2342 / ORS 2060), this protein is Phosphoenolpyruvate carboxykinase (ATP).